The chain runs to 161 residues: Large ribosomal subunit protein uL15 (161 aa).

The tract at residues 1-57 (MRLKDAIPKKGSQQRGRRVGRGISAGQGASCGKGMRGQKSRSGGSTRPGFEGGQNPL) is disordered. Residues 23–35 (ISAGQGASCGKGM) show a composition bias toward gly residues.

The protein belongs to the universal ribosomal protein uL15 family. In terms of assembly, part of the 50S ribosomal subunit.

Its function is as follows. Binds to the 23S rRNA. The sequence is that of Large ribosomal subunit protein uL15 from Trichodesmium erythraeum (strain IMS101).